The chain runs to 488 residues: Ribulose bisphosphate carboxylase large chain (488 aa).

The substrate site is built by Asn-127 and Thr-177. The Proton acceptor role is filled by Lys-179. Lys-181 serves as a coordination point for substrate. Lys-205, Asp-207, and Glu-208 together coordinate Mg(2+). The residue at position 205 (Lys-205) is an N6-carboxylysine. The active-site Proton acceptor is His-297. Residues Arg-298, His-330, and Ser-382 each coordinate substrate.

This sequence belongs to the RuBisCO large chain family. Type I subfamily. In terms of assembly, heterohexadecamer of 8 large chains and 8 small chains. Requires Mg(2+) as cofactor.

The protein resides in the plastid. It is found in the chloroplast. It catalyses the reaction 2 (2R)-3-phosphoglycerate + 2 H(+) = D-ribulose 1,5-bisphosphate + CO2 + H2O. It carries out the reaction D-ribulose 1,5-bisphosphate + O2 = 2-phosphoglycolate + (2R)-3-phosphoglycerate + 2 H(+). Its function is as follows. RuBisCO catalyzes two reactions: the carboxylation of D-ribulose 1,5-bisphosphate, the primary event in carbon dioxide fixation, as well as the oxidative fragmentation of the pentose substrate in the photorespiration process. Both reactions occur simultaneously and in competition at the same active site. In Pyropia yezoensis (Susabi-nori), this protein is Ribulose bisphosphate carboxylase large chain.